The primary structure comprises 188 residues: VQ motif-containing protein 18 (188 aa).

3 disordered regions span residues 1–20, 58–92, and 157–188; these read MEIT…VSMN, LTGK…HQPV, and GFIF…HNSS. The short motif at 51–60 is the VQ element; it reads FRSLVQSLTG. The segment covering 161–179 has biased composition (low complexity); sequence NNNNNNNNNNNNNNNNNTN.

It localises to the nucleus. In terms of biological role, may function as positive regulator of plant growth. This chain is VQ motif-containing protein 18, found in Arabidopsis thaliana (Mouse-ear cress).